The following is a 254-amino-acid chain: Triosephosphate isomerase (254 aa).

A substrate-binding site is contributed by 10-12 (NWK). His-99 functions as the Electrophile in the catalytic mechanism. Glu-169 serves as the catalytic Proton acceptor. Substrate is bound by residues Gly-175, Ser-215, and 236-237 (GG).

This sequence belongs to the triosephosphate isomerase family. In terms of assembly, homodimer.

It is found in the cytoplasm. It catalyses the reaction D-glyceraldehyde 3-phosphate = dihydroxyacetone phosphate. It functions in the pathway carbohydrate biosynthesis; gluconeogenesis. It participates in carbohydrate degradation; glycolysis; D-glyceraldehyde 3-phosphate from glycerone phosphate: step 1/1. In terms of biological role, involved in the gluconeogenesis. Catalyzes stereospecifically the conversion of dihydroxyacetone phosphate (DHAP) to D-glyceraldehyde-3-phosphate (G3P). The protein is Triosephosphate isomerase of Chlamydia felis (strain Fe/C-56) (Chlamydophila felis).